The chain runs to 332 residues: tRNA U34 carboxymethyltransferase (332 aa).

Carboxy-S-adenosyl-L-methionine contacts are provided by residues K96, W110, K115, G135, 157-159, 190-191, M205, Y209, and R324; these read DPT and IE.

This sequence belongs to the class I-like SAM-binding methyltransferase superfamily. CmoB family. As to quaternary structure, homotetramer.

It carries out the reaction carboxy-S-adenosyl-L-methionine + 5-hydroxyuridine(34) in tRNA = 5-carboxymethoxyuridine(34) in tRNA + S-adenosyl-L-homocysteine + H(+). Its function is as follows. Catalyzes carboxymethyl transfer from carboxy-S-adenosyl-L-methionine (Cx-SAM) to 5-hydroxyuridine (ho5U) to form 5-carboxymethoxyuridine (cmo5U) at position 34 in tRNAs. In Alteromonas mediterranea (strain DSM 17117 / CIP 110805 / LMG 28347 / Deep ecotype), this protein is tRNA U34 carboxymethyltransferase.